Here is a 394-residue protein sequence, read N- to C-terminus: RILP-like protein 1 (394 aa).

The 88-residue stretch at Glu-2–Lys-89 folds into the RH1 domain. The stretch at Glu-68–Gln-327 forms a coiled coil. Positions Arg-282–Leu-347 constitute an RH2 domain.

Belongs to the RILPL family.

The protein localises to the cytoplasm. Its subcellular location is the cytosol. It localises to the cytoskeleton. The protein resides in the microtubule organizing center. It is found in the centrosome. The protein localises to the cell projection. Its subcellular location is the cilium. In terms of biological role, plays a role in the regulation of cell shape and polarity. Plays a role in cellular protein transport, including protein transport away from primary cilia. Neuroprotective protein. This chain is RILP-like protein 1 (rilpl1), found in Xenopus laevis (African clawed frog).